The chain runs to 211 residues: Thiamine-phosphate synthase (211 aa).

Residues 44–48 and asparagine 75 contribute to the 4-amino-2-methyl-5-(diphosphooxymethyl)pyrimidine site; that span reads QYRNK. Aspartate 76 and aspartate 95 together coordinate Mg(2+). Residue serine 114 participates in 4-amino-2-methyl-5-(diphosphooxymethyl)pyrimidine binding. 2-[(2R,5Z)-2-carboxy-4-methylthiazol-5(2H)-ylidene]ethyl phosphate is bound at residue 140 to 142; that stretch reads TKS. Residue lysine 143 coordinates 4-amino-2-methyl-5-(diphosphooxymethyl)pyrimidine. Residue glycine 171 coordinates 2-[(2R,5Z)-2-carboxy-4-methylthiazol-5(2H)-ylidene]ethyl phosphate.

The protein belongs to the thiamine-phosphate synthase family. The cofactor is Mg(2+).

It catalyses the reaction 2-[(2R,5Z)-2-carboxy-4-methylthiazol-5(2H)-ylidene]ethyl phosphate + 4-amino-2-methyl-5-(diphosphooxymethyl)pyrimidine + 2 H(+) = thiamine phosphate + CO2 + diphosphate. The enzyme catalyses 2-(2-carboxy-4-methylthiazol-5-yl)ethyl phosphate + 4-amino-2-methyl-5-(diphosphooxymethyl)pyrimidine + 2 H(+) = thiamine phosphate + CO2 + diphosphate. It carries out the reaction 4-methyl-5-(2-phosphooxyethyl)-thiazole + 4-amino-2-methyl-5-(diphosphooxymethyl)pyrimidine + H(+) = thiamine phosphate + diphosphate. Its pathway is cofactor biosynthesis; thiamine diphosphate biosynthesis; thiamine phosphate from 4-amino-2-methyl-5-diphosphomethylpyrimidine and 4-methyl-5-(2-phosphoethyl)-thiazole: step 1/1. Functionally, condenses 4-methyl-5-(beta-hydroxyethyl)thiazole monophosphate (THZ-P) and 2-methyl-4-amino-5-hydroxymethyl pyrimidine pyrophosphate (HMP-PP) to form thiamine monophosphate (TMP). The sequence is that of Thiamine-phosphate synthase from Koribacter versatilis (strain Ellin345).